The following is a 146-amino-acid chain: MAVKIKLKRMGKVRTPQYRIVVADARAKRDGKAIEEIGKYHPKEEPSLIEVNSERVQYWLSVGAQPTDPVRHILKLTGDWQKFKGLPAPTKPLKVAEPKDKEAQEAAFQAVLKELVLPGSENKGGKSKKAEEKSAEKTAEKSEGEA.

Positions 119–146 are disordered; sequence GSENKGGKSKKAEEKSAEKTAEKSEGEA. Residues 128-146 show a composition bias toward basic and acidic residues; the sequence is KKAEEKSAEKTAEKSEGEA.

It belongs to the bacterial ribosomal protein bS16 family.

The chain is Small ribosomal subunit protein bS16 from Thermobifida fusca (strain YX).